The chain runs to 127 residues: Small ribosomal subunit protein bS6 (127 aa).

Positions 99–127 are disordered; that stretch reads PSPMMKEEKSKSMMPGDAAPAAPAETAAA. Residues 110–127 show a composition bias toward low complexity; sequence SMMPGDAAPAAPAETAAA.

This sequence belongs to the bacterial ribosomal protein bS6 family.

In terms of biological role, binds together with bS18 to 16S ribosomal RNA. This chain is Small ribosomal subunit protein bS6, found in Dechloromonas aromatica (strain RCB).